A 271-amino-acid chain; its full sequence is Formamidopyrimidine-DNA glycosylase (271 aa).

Pro2 serves as the catalytic Schiff-base intermediate with DNA. Glu3 functions as the Proton donor in the catalytic mechanism. Lys56 (proton donor; for beta-elimination activity) is an active-site residue. DNA-binding residues include His89, Arg107, and Arg151. The FPG-type zinc finger occupies Met236 to Lys270. The active-site Proton donor; for delta-elimination activity is Arg260.

Belongs to the FPG family. Monomer. Requires Zn(2+) as cofactor.

The enzyme catalyses Hydrolysis of DNA containing ring-opened 7-methylguanine residues, releasing 2,6-diamino-4-hydroxy-5-(N-methyl)formamidopyrimidine.. It carries out the reaction 2'-deoxyribonucleotide-(2'-deoxyribose 5'-phosphate)-2'-deoxyribonucleotide-DNA = a 3'-end 2'-deoxyribonucleotide-(2,3-dehydro-2,3-deoxyribose 5'-phosphate)-DNA + a 5'-end 5'-phospho-2'-deoxyribonucleoside-DNA + H(+). Functionally, involved in base excision repair of DNA damaged by oxidation or by mutagenic agents. Acts as a DNA glycosylase that recognizes and removes damaged bases. Has a preference for oxidized purines, such as 7,8-dihydro-8-oxoguanine (8-oxoG). Has AP (apurinic/apyrimidinic) lyase activity and introduces nicks in the DNA strand. Cleaves the DNA backbone by beta-delta elimination to generate a single-strand break at the site of the removed base with both 3'- and 5'-phosphates. The protein is Formamidopyrimidine-DNA glycosylase of Polaromonas naphthalenivorans (strain CJ2).